Reading from the N-terminus, the 204-residue chain is Tat proofreading chaperone DmsD (204 aa).

This sequence belongs to the TorD/DmsD family. DmsD subfamily. In terms of assembly, monomer in solution.

In terms of biological role, required for biogenesis/assembly of DMSO reductase, but not for the interaction of the DmsA signal peptide with the Tat system. May be part of a chaperone cascade complex that facilitates a folding-maturation pathway for the substrate protein. In Salmonella typhimurium (strain LT2 / SGSC1412 / ATCC 700720), this protein is Tat proofreading chaperone DmsD.